The chain runs to 752 residues: Translation initiation factor IF-2 (752 aa).

Residues 26-167 are disordered; the sequence is RQGMGVKSHM…QPTQRKDKPL (142 aa). A compositionally biased stretch (polar residues) spans 34 to 47; that stretch reads HMSSVTPDQAQQLR. A compositionally biased stretch (low complexity) spans 72–81; sequence KQNNHQAQNH. Basic and acidic residues predominate over residues 83 to 96; it reads QHHDHDKTQNERPQ. Residues 101–129 are compositionally biased toward polar residues; it reads SRSNNGTKDNNQHQNNGGRFGGSLNNDQG. Positions 131–150 are enriched in basic residues; sequence NGKRFNKKNKKNKKHNKNKR. Over residues 151 to 167 the composition is skewed to basic and acidic residues; sequence LREVAHKQPTQRKDKPL. The region spanning 253–422 is the tr-type G domain; it reads TRPAVVTVMG…LLQAEMLELK (170 aa). Residues 262–269 form a G1 region; the sequence is GHVDHGKT. 262-269 is a GTP binding site; that stretch reads GHVDHGKT. The tract at residues 287–291 is G2; it reads GITQE. The segment at 308–311 is G3; that stretch reads DTPG. GTP-binding positions include 308–312 and 362–365; these read DTPGH and NKID. The G4 stretch occupies residues 362-365; that stretch reads NKID. Positions 398 to 400 are G5; that stretch reads SAK.

This sequence belongs to the TRAFAC class translation factor GTPase superfamily. Classic translation factor GTPase family. IF-2 subfamily.

It localises to the cytoplasm. Its function is as follows. One of the essential components for the initiation of protein synthesis. Protects formylmethionyl-tRNA from spontaneous hydrolysis and promotes its binding to the 30S ribosomal subunits. Also involved in the hydrolysis of GTP during the formation of the 70S ribosomal complex. The polypeptide is Translation initiation factor IF-2 (Limosilactobacillus reuteri (strain DSM 20016) (Lactobacillus reuteri)).